Here is a 358-residue protein sequence, read N- to C-terminus: Neutral protease 2 homolog PADG_00776 (358 aa).

Residues 1 to 19 (MRRVSGILAVAAFTISAFA) form the signal peptide. Residues 20–185 (GVIQPVAKDA…MNQFVKIAKL (166 aa)) constitute a propeptide that is removed on maturation. Intrachain disulfides connect Cys-188–Cys-259 and Cys-266–Cys-284. N-linked (GlcNAc...) asparagine glycosylation occurs at Asn-249. His-309 contacts Zn(2+). The active site involves Glu-310. Residues His-313 and Asp-324 each coordinate Zn(2+).

Belongs to the peptidase M35 family. The cofactor is Zn(2+).

The protein localises to the secreted. The catalysed reaction is Preferential cleavage of bonds with hydrophobic residues in P1'. Also 3-Asn-|-Gln-4 and 8-Gly-|-Ser-9 bonds in insulin B chain.. Functionally, secreted metalloproteinase that allows assimilation of proteinaceous substrates. Shows high activities on basic nuclear substrates such as histone and protamine. The polypeptide is Neutral protease 2 homolog PADG_00776 (Paracoccidioides brasiliensis (strain Pb18)).